Reading from the N-terminus, the 477-residue chain is Argininosuccinate lyase (477 aa).

Belongs to the lyase 1 family. Argininosuccinate lyase subfamily.

Its subcellular location is the cytoplasm. The enzyme catalyses 2-(N(omega)-L-arginino)succinate = fumarate + L-arginine. The protein operates within amino-acid biosynthesis; L-arginine biosynthesis; L-arginine from L-ornithine and carbamoyl phosphate: step 3/3. The polypeptide is Argininosuccinate lyase (Acinetobacter baumannii (strain ACICU)).